Reading from the N-terminus, the 275-residue chain is S-methyl-5'-thioadenosine phosphorylase (275 aa).

Residues Ser20, 62-63 (RH), and 95-96 (SA) contribute to the phosphate site. Intrachain disulfides connect Cys143–Cys210, Cys205–Cys266, and Cys264–Cys267. Met195 is a binding site for substrate. Residue Thr196 coordinates phosphate. A substrate-binding site is contributed by 219–221 (DYD).

The protein belongs to the PNP/MTAP phosphorylase family. MTAP subfamily. Homohexamer. Dimer of a homotrimer.

The catalysed reaction is S-methyl-5'-thioadenosine + phosphate = 5-(methylsulfanyl)-alpha-D-ribose 1-phosphate + adenine. It participates in amino-acid biosynthesis; L-methionine biosynthesis via salvage pathway; S-methyl-5-thio-alpha-D-ribose 1-phosphate from S-methyl-5'-thioadenosine (phosphorylase route): step 1/1. Functionally, catalyzes the reversible phosphorylation of S-methyl-5'-thioadenosine (MTA) to adenine and 5-methylthioribose-1-phosphate. Involved in the breakdown of MTA, a major by-product of polyamine biosynthesis. Responsible for the first step in the methionine salvage pathway after MTA has been generated from S-adenosylmethionine. Has broad substrate specificity with 6-aminopurine nucleosides as preferred substrates. The chain is S-methyl-5'-thioadenosine phosphorylase from Aeropyrum pernix (strain ATCC 700893 / DSM 11879 / JCM 9820 / NBRC 100138 / K1).